A 387-amino-acid polypeptide reads, in one-letter code: 3-ketoacyl-CoA thiolase (387 aa).

The Acyl-thioester intermediate role is filled by cysteine 91. Active-site proton acceptor residues include histidine 343 and cysteine 373.

It belongs to the thiolase-like superfamily. Thiolase family. Heterotetramer of two alpha chains (FadB) and two beta chains (FadA).

The protein resides in the cytoplasm. The enzyme catalyses an acyl-CoA + acetyl-CoA = a 3-oxoacyl-CoA + CoA. It functions in the pathway lipid metabolism; fatty acid beta-oxidation. In terms of biological role, catalyzes the final step of fatty acid oxidation in which acetyl-CoA is released and the CoA ester of a fatty acid two carbons shorter is formed. In Yersinia pseudotuberculosis serotype O:1b (strain IP 31758), this protein is 3-ketoacyl-CoA thiolase.